Consider the following 464-residue polypeptide: tRNA modification GTPase MnmE (464 aa).

(6S)-5-formyl-5,6,7,8-tetrahydrofolate contacts are provided by Arg-29, Glu-91, and Arg-131. Residues 226-387 enclose the TrmE-type G domain; sequence GLKVALTGKP…LINYLLKKCG (162 aa). Asn-236 lines the K(+) pocket. Residues 236–241, 255–261, and 280–283 contribute to the GTP site; these read NVGKSS, TDLPGTT, and DTAG. Position 240 (Ser-240) interacts with Mg(2+). The K(+) site is built by Thr-255, Leu-257, and Thr-260. Residue Thr-261 participates in Mg(2+) binding. Lys-464 lines the (6S)-5-formyl-5,6,7,8-tetrahydrofolate pocket.

The protein belongs to the TRAFAC class TrmE-Era-EngA-EngB-Septin-like GTPase superfamily. TrmE GTPase family. As to quaternary structure, homodimer. Heterotetramer of two MnmE and two MnmG subunits. Requires K(+) as cofactor.

The protein localises to the cytoplasm. In terms of biological role, exhibits a very high intrinsic GTPase hydrolysis rate. Involved in the addition of a carboxymethylaminomethyl (cmnm) group at the wobble position (U34) of certain tRNAs, forming tRNA-cmnm(5)s(2)U34. The sequence is that of tRNA modification GTPase MnmE from Prochlorococcus marinus (strain NATL2A).